Reading from the N-terminus, the 213-residue chain is Superoxide dismutase [Fe] (213 aa).

Residues histidine 28, histidine 82, aspartate 164, and histidine 168 each coordinate Fe cation.

It belongs to the iron/manganese superoxide dismutase family. Homotetramer. It depends on Fe cation as a cofactor.

It carries out the reaction 2 superoxide + 2 H(+) = H2O2 + O2. Its function is as follows. Destroys superoxide anion radicals which are normally produced within the cells and which are toxic to biological systems. The protein is Superoxide dismutase [Fe] (sodB) of Aquifex pyrophilus.